A 545-amino-acid chain; its full sequence is Transducer protein Htr7 (545 aa).

The next 3 membrane-spanning stretches (helical) occupy residues 10–30, 44–64, and 80–100; these read AVVA…AAAL, FWMA…SLML, and PLMA…LAIV. The disordered stretch occupies residues 111–157; that stretch reads AQRRQEAEEERAEAERAREKAEQKQAEAERQTAEAESAKQDARERSA. A compositionally biased stretch (basic and acidic residues) spans 123 to 157; that stretch reads EAERAREKAEQKQAEAERQTAEAESAKQDARERSA. Residues 164 to 217 enclose the HAMP domain; it reads ADLESQATEVGATLEAASDGDLTARVDATTDNAEIAEVATVVNDMLTTMERTID. A Methyl-accepting transducer domain is found at 236 to 476; that stretch reads GAKEIQDASQ…RVVSSVDDIA (241 aa). Glu-281 bears the Glutamate methyl ester (Glu) mark. A disordered region spans residues 521–545; it reads LNEFRTEATGTAHGEATDAPAGQSD. A compositionally biased stretch (low complexity) spans 527–539; the sequence is EATGTAHGEATDA.

Belongs to the methyl-accepting chemotaxis (MCP) protein family. In terms of processing, methylated by CheR.

The protein resides in the cell membrane. Functionally, potentially involved in chemo- or phototactic signal transduction. The chain is Transducer protein Htr7 (htr7) from Halobacterium salinarum (strain ATCC 29341 / DSM 671 / R1).